The sequence spans 106 residues: Protein translation factor SUI1 homolog (106 aa).

The protein belongs to the SUI1 family.

Its function is as follows. Additional factor that functions in concert with eIF-2 and the initiator tRNA in directing the ribosome to the proper start site of translation. The protein is Protein translation factor SUI1 homolog of Acanthamoeba polyphaga mimivirus (APMV).